The following is a 444-amino-acid chain: tRNA pseudouridine synthase Pus10 (444 aa).

The active-site Nucleophile is the Asp-265. Residues Tyr-333 and Tyr-405 each contribute to the substrate site.

The protein belongs to the pseudouridine synthase Pus10 family.

It carries out the reaction uridine(54) in tRNA = pseudouridine(54) in tRNA. It catalyses the reaction uridine(55) in tRNA = pseudouridine(55) in tRNA. Its function is as follows. Responsible for synthesis of pseudouridine from uracil-54 and uracil-55 in the psi GC loop of transfer RNAs. The sequence is that of tRNA pseudouridine synthase Pus10 from Thermofilum pendens (strain DSM 2475 / Hrk 5).